We begin with the raw amino-acid sequence, 510 residues long: GMP synthase [glutamine-hydrolyzing] (510 aa).

Positions 5 to 195 (TVVVLDFGGQ…LFEICGLRGD (191 aa)) constitute a Glutamine amidotransferase type-1 domain. Catalysis depends on C82, which acts as the Nucleophile. Catalysis depends on residues H169 and E171. Residues 196–385 (WDLSDFISEA…LGIPAEILWR (190 aa)) enclose the GMPS ATP-PPase domain. 223–229 (SGGVDSS) lines the ATP pocket.

Homodimer.

The catalysed reaction is XMP + L-glutamine + ATP + H2O = GMP + L-glutamate + AMP + diphosphate + 2 H(+). It functions in the pathway purine metabolism; GMP biosynthesis; GMP from XMP (L-Gln route): step 1/1. Its function is as follows. Catalyzes the synthesis of GMP from XMP. This Syntrophomonas wolfei subsp. wolfei (strain DSM 2245B / Goettingen) protein is GMP synthase [glutamine-hydrolyzing].